Here is a 201-residue protein sequence, read N- to C-terminus: NADH-quinone oxidoreductase subunit C (201 aa).

It belongs to the complex I 30 kDa subunit family. NDH-1 is composed of 14 different subunits. Subunits NuoB, C, D, E, F, and G constitute the peripheral sector of the complex.

The protein resides in the cell inner membrane. It catalyses the reaction a quinone + NADH + 5 H(+)(in) = a quinol + NAD(+) + 4 H(+)(out). In terms of biological role, NDH-1 shuttles electrons from NADH, via FMN and iron-sulfur (Fe-S) centers, to quinones in the respiratory chain. The immediate electron acceptor for the enzyme in this species is believed to be ubiquinone. Couples the redox reaction to proton translocation (for every two electrons transferred, four hydrogen ions are translocated across the cytoplasmic membrane), and thus conserves the redox energy in a proton gradient. The protein is NADH-quinone oxidoreductase subunit C of Ruegeria sp. (strain TM1040) (Silicibacter sp.).